Consider the following 536-residue polypeptide: CTP synthase (536 aa).

Residues 1–267 (MSKFVFVTGG…CKQTLNCLEL (267 aa)) are amidoligase domain. A CTP-binding site is contributed by Ser13. Residue Ser13 participates in UTP binding. ATP-binding positions include 14–19 (SIGKGI) and Asp71. Positions 71 and 141 each coordinate Mg(2+). Residues 148–150 (DIE), 188–193 (KTKPTQ), and Lys224 contribute to the CTP site. UTP contacts are provided by residues 188–193 (KTKPTQ) and Lys224. Positions 292–534 (KVALVGKYIE…IKASQEKLEQ (243 aa)) constitute a Glutamine amidotransferase type-1 domain. An L-glutamine-binding site is contributed by Gly354. Catalysis depends on Cys381, which acts as the Nucleophile; for glutamine hydrolysis. L-glutamine is bound by residues 382–385 (LGMQ), Glu405, and Arg462. Active-site residues include His507 and Glu509.

Belongs to the CTP synthase family. As to quaternary structure, homotetramer.

It catalyses the reaction UTP + L-glutamine + ATP + H2O = CTP + L-glutamate + ADP + phosphate + 2 H(+). It carries out the reaction L-glutamine + H2O = L-glutamate + NH4(+). The catalysed reaction is UTP + NH4(+) + ATP = CTP + ADP + phosphate + 2 H(+). It functions in the pathway pyrimidine metabolism; CTP biosynthesis via de novo pathway; CTP from UDP: step 2/2. Its activity is regulated as follows. Allosterically activated by GTP, when glutamine is the substrate; GTP has no effect on the reaction when ammonia is the substrate. The allosteric effector GTP functions by stabilizing the protein conformation that binds the tetrahedral intermediate(s) formed during glutamine hydrolysis. Inhibited by the product CTP, via allosteric rather than competitive inhibition. In terms of biological role, catalyzes the ATP-dependent amination of UTP to CTP with either L-glutamine or ammonia as the source of nitrogen. Regulates intracellular CTP levels through interactions with the four ribonucleotide triphosphates. The chain is CTP synthase from Prochlorococcus marinus subsp. pastoris (strain CCMP1986 / NIES-2087 / MED4).